Consider the following 245-residue polypeptide: Protein-L-isoaspartate O-methyltransferase 1 (245 aa).

Serine 76 is a catalytic residue.

It belongs to the methyltransferase superfamily. L-isoaspartyl/D-aspartyl protein methyltransferase family.

The protein resides in the cytoplasm. The enzyme catalyses [protein]-L-isoaspartate + S-adenosyl-L-methionine = [protein]-L-isoaspartate alpha-methyl ester + S-adenosyl-L-homocysteine. Catalyzes the methyl esterification of L-isoaspartyl residues in peptides and proteins that result from spontaneous decomposition of normal L-aspartyl and L-asparaginyl residues. It plays a role in the repair and/or degradation of damaged proteins. The polypeptide is Protein-L-isoaspartate O-methyltransferase 1 (Rhodopseudomonas palustris (strain HaA2)).